The following is an 859-amino-acid chain: Linoleate 9S-lipoxygenase 1 (859 aa).

In terms of domain architecture, PLAT spans 21-161 (VKGTVVLMKK…HYTTDRVFFS (141 aa)). In terms of domain architecture, Lipoxygenase spans 164–859 (TYLPHETPAT…GRGIPNSVSI (696 aa)). Positions 213 to 246 (KNPRPVLGGTQEYPYPRRGRTGRKPTKEDPQTES) are disordered. The Fe cation site is built by His-519, His-524, His-711, Asn-715, and Ile-859.

This sequence belongs to the lipoxygenase family. As to quaternary structure, monomer. Fe cation is required as a cofactor. In terms of tissue distribution, seedlings, roots, leaves, and flowers (at protein level). Expressed in guard cells.

The protein localises to the cytoplasm. It carries out the reaction (9Z,12Z)-octadecadienoate + O2 = (9S)-hydroperoxy-(10E,12Z)-octadecadienoate. The enzyme catalyses (9Z,12Z,15Z)-octadecatrienoate + O2 = (9S)-hydroperoxy-(10E,12Z,15Z)-octadecatrienoate. The protein operates within lipid metabolism; oxylipin biosynthesis. 9S-lipoxygenase that can use linoleic acid or linolenic acid as substrates. Plant lipoxygenases may be involved in a number of diverse aspects of plant physiology including growth and development, pest resistance, and senescence or responses to wounding. Catalyzes the hydroperoxidation of lipids containing a cis,cis-1,4-pentadiene structure. Function as regulators of root development by controlling the emergence of lateral roots. 9S-lypoxygenase-derived oxylipins may play an antagonistic role to ethylene signaling in the control of responses involving oxidative stress, lipid peroxidation and plant defense. LOX1-derived oxylipins may be involved in stress signaling from roots to shoots in response to cadmium exposure. 9S-lypoxygenase-derived oxylipins are engaged during infection to control the balance between salicylic acid (SA) and jasmonate (JA) signaling to facilitate infection by the fungal pathogen Fusarium graminearum. 9S-lypoxygenase-derived oxylipins activate brassinosteroid signaling to promote cell wall-based defense and limit pathogen infection. The LOX1-derived compound (9S)-hydroperoxy-(10E,12Z,15Z)-octadecatrienoate protects plant tissues against infection by the bacterial pathogen Pseudomonas syringae pv tomato DC3000. The LOX1-derived oxylipins are required to trigger stomatal closure in response to both infection by the bacterial pathogen Pseudomonas syringae pv tomato DC3000, and the pathogen-associated molecular pattern (PAMP) flagellin peptide flg22. Contributes to the oxidation of free fatty acids during seed aging. In Arabidopsis thaliana (Mouse-ear cress), this protein is Linoleate 9S-lipoxygenase 1.